The chain runs to 240 residues: Urease accessory protein UreD (240 aa).

It belongs to the UreD family. As to quaternary structure, ureD, UreF and UreG form a complex that acts as a GTP-hydrolysis-dependent molecular chaperone, activating the urease apoprotein by helping to assemble the nickel containing metallocenter of UreC. The UreE protein probably delivers the nickel.

The protein localises to the cytoplasm. Its function is as follows. Required for maturation of urease via the functional incorporation of the urease nickel metallocenter. This is Urease accessory protein UreD from Granulibacter bethesdensis (strain ATCC BAA-1260 / CGDNIH1).